Reading from the N-terminus, the 313-residue chain is Type I restriction enzyme EcoprrI endonuclease subunit (313 aa).

The protein belongs to the HsdR family. In terms of assembly, the type I restriction/modification system is composed of three polypeptides R, M and S; the restriction enzyme has stoichiometry R(2)M(2)S(1) while the methyltransferase is M(2)S(1).

The enzyme catalyses Endonucleolytic cleavage of DNA to give random double-stranded fragments with terminal 5'-phosphates, ATP is simultaneously hydrolyzed.. Functionally, the subtype C restriction (R) subunit of a type I restriction enzyme that recognizes 5'-CCAN(7)RTGC-3' and cleaves a random distance away. The R subunit is required for both endonuclease and ATPase activities but not for modification. Cleaves only non-methylated DNA, hemi-methylated and fully methylated DNA are not substrates. After locating a non-methylated recognition site, the enzyme complex serves as a molecular motor that translocates DNA in an ATP-dependent manner until a collision occurs that triggers cleavage. The prr locus restricts phage T4 mutants lacking polynucleotide kinase or RNA ligase; T4 mutants lacking these genes manifest a T4-induced anticodon nuclease (ACNase). This is a putative 'masking-agent' for the ACNase encoded by prrC. It is thought that Stp and other T4-encoded ACNase factors counteract the masking agents, thus activating the latent ACNase. The polypeptide is Type I restriction enzyme EcoprrI endonuclease subunit (Escherichia coli).